A 220-amino-acid chain; its full sequence is Chaperone protein TorD (220 aa).

It belongs to the TorD/DmsD family. TorD subfamily.

Its subcellular location is the cytoplasm. Functionally, involved in the biogenesis of TorA. Acts on TorA before the insertion of the molybdenum cofactor and, as a result, probably favors a conformation of the apoenzyme that is competent for acquiring the cofactor. This Vibrio cholerae serotype O1 (strain M66-2) protein is Chaperone protein TorD.